The sequence spans 361 residues: D-alanine--D-alanine ligase (361 aa).

Residues 134–344 enclose the ATP-grasp domain; it reads KILAQRAGVP…YTDLITKLID (211 aa). ATP is bound at residue 169-224; the sequence is ASQLGSDLFVKPSNQGSSVGVSHVTNEKEYKVALAEAFKYDDKVLVEETVHGTEVE. The Mg(2+) site is built by Asp297, Glu311, and Asn313.

This sequence belongs to the D-alanine--D-alanine ligase family. Mg(2+) is required as a cofactor. The cofactor is Mn(2+).

The protein localises to the cytoplasm. The enzyme catalyses 2 D-alanine + ATP = D-alanyl-D-alanine + ADP + phosphate + H(+). Its pathway is cell wall biogenesis; peptidoglycan biosynthesis. In terms of biological role, cell wall formation. The chain is D-alanine--D-alanine ligase from Lactobacillus gasseri (strain ATCC 33323 / DSM 20243 / BCRC 14619 / CIP 102991 / JCM 1131 / KCTC 3163 / NCIMB 11718 / NCTC 13722 / AM63).